The following is a 543-amino-acid chain: Glucose-6-phosphate isomerase (543 aa).

The active-site Proton donor is glutamate 353. Catalysis depends on residues histidine 384 and lysine 512.

This sequence belongs to the GPI family.

Its subcellular location is the cytoplasm. The enzyme catalyses alpha-D-glucose 6-phosphate = beta-D-fructose 6-phosphate. It functions in the pathway carbohydrate biosynthesis; gluconeogenesis. Its pathway is carbohydrate degradation; glycolysis; D-glyceraldehyde 3-phosphate and glycerone phosphate from D-glucose: step 2/4. Functionally, catalyzes the reversible isomerization of glucose-6-phosphate to fructose-6-phosphate. The chain is Glucose-6-phosphate isomerase from Christiangramia forsetii (strain DSM 17595 / CGMCC 1.15422 / KT0803) (Gramella forsetii).